A 76-amino-acid polypeptide reads, in one-letter code: Cytochrome c oxidase subunit 6C (76 aa).

Residues 4–22 are Mitochondrial matrix-facing; it reads GALLPKPQMRGLLAKRLRV. The helical transmembrane segment at 23–44 threads the bilayer; sequence HIAGAFIVALGVAAAYKFGVAE. Over 45-76 the chain is Mitochondrial intermembrane; the sequence is PRKKAYAEFYRNYDSMKDFEEMRKAGIFQSAK.

This sequence belongs to the cytochrome c oxidase subunit 6c family. Component of the cytochrome c oxidase (complex IV, CIV), a multisubunit enzyme composed of 14 subunits. The complex is composed of a catalytic core of 3 subunits MT-CO1, MT-CO2 and MT-CO3, encoded in the mitochondrial DNA, and 11 supernumerary subunits COX4I, COX5A, COX5B, COX6A, COX6B, COX6C, COX7A, COX7B, COX7C, COX8 and NDUFA4, which are encoded in the nuclear genome. The complex exists as a monomer or a dimer and forms supercomplexes (SCs) in the inner mitochondrial membrane with NADH-ubiquinone oxidoreductase (complex I, CI) and ubiquinol-cytochrome c oxidoreductase (cytochrome b-c1 complex, complex III, CIII), resulting in different assemblies (supercomplex SCI(1)III(2)IV(1) and megacomplex MCI(2)III(2)IV(2)). Acetylation of Lys-61 is observed in liver mitochondria from fasted mice but not from fed mice.

It is found in the mitochondrion inner membrane. Its pathway is energy metabolism; oxidative phosphorylation. In terms of biological role, component of the cytochrome c oxidase, the last enzyme in the mitochondrial electron transport chain which drives oxidative phosphorylation. The respiratory chain contains 3 multisubunit complexes succinate dehydrogenase (complex II, CII), ubiquinol-cytochrome c oxidoreductase (cytochrome b-c1 complex, complex III, CIII) and cytochrome c oxidase (complex IV, CIV), that cooperate to transfer electrons derived from NADH and succinate to molecular oxygen, creating an electrochemical gradient over the inner membrane that drives transmembrane transport and the ATP synthase. Cytochrome c oxidase is the component of the respiratory chain that catalyzes the reduction of oxygen to water. Electrons originating from reduced cytochrome c in the intermembrane space (IMS) are transferred via the dinuclear copper A center (CU(A)) of subunit 2 and heme A of subunit 1 to the active site in subunit 1, a binuclear center (BNC) formed by heme A3 and copper B (CU(B)). The BNC reduces molecular oxygen to 2 water molecules using 4 electrons from cytochrome c in the IMS and 4 protons from the mitochondrial matrix. The chain is Cytochrome c oxidase subunit 6C (Cox6c) from Mus musculus (Mouse).